Here is a 421-residue protein sequence, read N- to C-terminus: Phosphatidylinositol 5-phosphate 4-kinase type-2 gamma (421 aa).

An N-acetylalanine modification is found at Ala2. Ser26 carries the post-translational modification Phosphoserine. The region spanning 43-420 (AADPLVGVFL…RFLDFITNIF (378 aa)) is the PIPK domain. The interval 69–75 (VMLLPDD) is required for interaction with PIP5K1A. Phosphoserine is present on Ser349.

Interacts with PIP5K1A; the interaction inhibits PIP5K1A kinase activity. Phosphorylated, phosphorylation is induced by EGF.

It localises to the endoplasmic reticulum. The protein localises to the cytoplasm. The catalysed reaction is a 1,2-diacyl-sn-glycero-3-phospho-(1D-myo-inositol-5-phosphate) + ATP = a 1,2-diacyl-sn-glycero-3-phospho-(1D-myo-inositol-4,5-bisphosphate) + ADP + H(+). The enzyme catalyses 1,2-dihexadecanoyl-sn-glycero-3-phospho-(1D-myo-inositol-5-phosphate) + ATP = 1,2-dihexadecanoyl-sn-glycero-3-phospho-(1D-myo-inositol-4,5-bisphosphate) + ADP + H(+). It carries out the reaction 1,2-dihexadecanoyl-sn-glycero-3-phospho-(1D-myo-inositol-5-phosphate) + GTP = 1,2-dihexadecanoyl-sn-glycero-3-phospho-(1D-myo-inositol-4,5-bisphosphate) + GDP + H(+). In terms of biological role, phosphatidylinositol 5-phosphate 4-kinase with low enzymatic activity. May be a GTP sensor, has higher GTP-dependent kinase activity than ATP-dependent kinase activity. PIP4Ks negatively regulate insulin signaling through a catalytic-independent mechanism. They interact with PIP5Ks and suppress PIP5K-mediated PtdIns(4,5)P2 synthesis and insulin-dependent conversion to PtdIns(3,4,5)P3. The chain is Phosphatidylinositol 5-phosphate 4-kinase type-2 gamma from Homo sapiens (Human).